A 408-amino-acid chain; its full sequence is Sprouty-related, EVH1 domain-containing protein 3 (408 aa).

Residues 1 to 113 enclose the WH1 domain; sequence MVRVRAVVMA…KSLLAALAAL (113 aa). The tract at residues 118-226 is disordered; the sequence is LTPSSSSSSS…YEDYRRSGPP (109 aa). The segment covering 120 to 130 has biased composition (low complexity); the sequence is PSSSSSSSSPS. Residues 192–242 enclose the KBD domain; sequence LPFTGIPEPSESLAGAGSQGWGSRGYEDYRRSGPPPPPLALSTCVVRFAKT. The residue at position 238 (Arg238) is an Asymmetric dimethylarginine. At Arg246 the chain carries Omega-N-methylarginine. A disordered region spans residues 256 to 286; that stretch reads LPAPLTEAAPPAPPARPPPGPGPTPAPAKAS. Positions 265–281 are enriched in pro residues; sequence PPAPPARPPPGPGPTPA. Positions 294–405 constitute an SPR domain; sequence RCVHCRALFR…CAGCGGRHEE (112 aa).

Interacts with palmitoyltransferase ZDHHC17/HIP14; the interaction leads to palmitoylation of SPRED3. Phosphorylated on tyrosine. Post-translationally, palmitoylated by ZDHHC17/HIP14. In terms of processing, ubiquitinated. As to expression, brain specific.

Its subcellular location is the cell membrane. Functionally, tyrosine kinase substrate that inhibits growth-factor-mediated activation of MAP kinase. Inhibits fibroblast growth factor (FGF)-induced retinal lens fiber differentiation, probably by inhibiting FGF-mediated phosphorylation of ERK1/2. Inhibits TGFB-induced epithelial-to-mesenchymal transition in lens epithelial cells. The protein is Sprouty-related, EVH1 domain-containing protein 3 (Spred3) of Mus musculus (Mouse).